We begin with the raw amino-acid sequence, 78 residues long: Bowman-Birk type proteinase inhibitors I-A, I-B, and I-A' (78 aa).

7 disulfides stabilise this stretch: Cys18–Cys72, Cys19–Cys34, Cys22–Cys68, Cys24–Cys32, Cys42–Cys49, Cys46–Cys61, and Cys51–Cys59.

Belongs to the Bowman-Birk serine protease inhibitor family.

These inhibitors strongly inhibit trypsin. This is Bowman-Birk type proteinase inhibitors I-A, I-B, and I-A' from Phaseolus angularis (Azuki bean).